Reading from the N-terminus, the 324-residue chain is EFHPGTFPPSFGSVAPFLADLDTTDGLGNVYYREDLSPFIIQMAAEYVQRGFPEVSFQPTSVVVVTWESMAPYGGPSGSLVEEGKRNTFQAVLASSNSSSYAIFLYPDDGLQFFTTFSKKDENQVPAVVGFSKGLEGFLWKSNGAYNIFANDRESIENLAKSSNAGHQGVWVFEIGSPATAKGVVPADVNLDVDDDGADYEDEDYDLQTSHLGLEDVATQPFPSHSPRRGYPDPHNVPRTLAPSYEATERPHGIPTERTKSFQLPVERFPQKHPQVIDVDEVEETGVVFSYNTGSQQTCANNRHQCSVHAECRDYATGFCCRCV.

The 163-residue stretch at 16–178 (PFLADLDTTD…GVWVFEIGSP (163 aa)) folds into the NIDO domain. Asn97 is a glycosylation site (N-linked (GlcNAc...) asparagine). A sulfotyrosine mark is found at Tyr200 and Tyr205. A disordered region spans residues 219 to 259 (TQPFPSHSPRRGYPDPHNVPRTLAPSYEATERPHGIPTERT). Residues 247-259 (ATERPHGIPTERT) are compositionally biased toward basic and acidic residues. One can recognise an EGF-like domain in the interval 295–324 (SQQTCANNRHQCSVHAECRDYATGFCCRCV). Disulfide bonds link Cys299–Cys312 and Cys306–Cys321.

Interacts with FBLN1. Interacts with LGALS3BP. Interacts with PLXDC1. Interacts with SVEP1. N- and O-glycosylated.

It localises to the secreted. Its subcellular location is the extracellular space. The protein resides in the extracellular matrix. It is found in the basement membrane. Sulfated glycoprotein widely distributed in basement membranes and tightly associated with laminin. Also binds to collagen IV and perlecan. It probably has a role in cell-extracellular matrix interactions. The polypeptide is Nidogen-1 (Nid1) (Rattus norvegicus (Rat)).